A 198-amino-acid chain; its full sequence is Dermorphin-2 (198 aa).

Residues 1–20 (MSFLKKSLLLILFLGLVSLS) form the signal peptide. Positions 21 to 45 (VCKEEKRVSEEENENEENHEEGSEM) are excised as a propeptide. Residues 24 to 198 (EEKRVSEEEN…AFGYPSGEAK (175 aa)) are disordered. A49 carries the D-alanine (Ala) modification. S54 is subject to Serine amide. A compositionally biased stretch (basic and acidic residues) spans 56–65 (EAKKIKRESE). The propeptide occupies 56 to 80 (EAKKIKRESEEEKEIEENHEEGSEM). At A84 the chain carries D-alanine (Ala). Position 89 is a serine amide (S89). Residues 91-115 (EAKKIKRESEEENENEENHEEGSEM) constitute a propeptide that is removed on maturation. Acidic residues predominate over residues 100–109 (EEENENEENH). A119 bears the D-alanine (Ala) mark. S124 carries the post-translational modification Serine amide. A compositionally biased stretch (basic and acidic residues) spans 126 to 135 (EAKKIKRESE). A propeptide spanning residues 126–150 (EAKKIKRESEEEKEIEENHEEGSEM) is cleaved from the precursor. A154 carries the D-alanine (Ala) modification. S159 is modified (serine amide). A propeptide spanning residues 161–185 (EAKKIKRESEEENENEENHEEGSEM) is cleaved from the precursor. The segment covering 170–179 (EEENENEENH) has biased composition (acidic residues). The residue at position 189 (A189) is a D-alanine (Ala). S194 carries the serine amide modification. Positions 196-198 (EAK) are excised as a propeptide.

The protein belongs to the frog skin active peptide (FSAP) family. Dermorphin subfamily. As to expression, expressed by the skin glands.

The protein localises to the secreted. Functionally, dermorphin has a very potent opiate-like activity. It has high affinity and selectivity for mu-type opioid receptors. In Phyllomedusa sauvagei (Sauvage's leaf frog), this protein is Dermorphin-2.